We begin with the raw amino-acid sequence, 644 residues long: Large subunit GTPase 1 homolog (644 aa).

Residues M1–D31 form a disordered region. Phosphoserine is present on residues S93 and S97. The CP-type G domain occupies W164–P430. GTP is bound at residue N212–D215. The disordered stretch occupies residues K253–N345. Residues C302–C326 are compositionally biased toward acidic residues. Residues G379–S386 and D423–G426 each bind GTP. A disordered region spans residues V618–V644. Basic residues predominate over residues P622–V644.

The protein belongs to the TRAFAC class YlqF/YawG GTPase family. LSG1 subfamily.

The protein resides in the cytoplasm. Its subcellular location is the endoplasmic reticulum. The protein localises to the nucleus. It localises to the cajal body. The enzyme catalyses GTP + H2O = GDP + phosphate + H(+). Functionally, functions as a GTPase. May act by mediating the release of NMD3 from the 60S ribosomal subunit after export into the cytoplasm during the 60S ribosomal subunit maturation. The protein is Large subunit GTPase 1 homolog of Mus musculus (Mouse).